Consider the following 575-residue polypeptide: DNA-directed RNA polymerase subunit beta' (575 aa).

The protein belongs to the RNA polymerase beta' chain family. As to quaternary structure, in plastids the minimal PEP RNA polymerase catalytic core is composed of four subunits: alpha, beta, beta', and beta''. When a (nuclear-encoded) sigma factor is associated with the core the holoenzyme is formed, which can initiate transcription.

It localises to the plastid. Its subcellular location is the apicoplast. The catalysed reaction is RNA(n) + a ribonucleoside 5'-triphosphate = RNA(n+1) + diphosphate. Its function is as follows. DNA-dependent RNA polymerase catalyzes the transcription of DNA into RNA using the four ribonucleoside triphosphates as substrates. The sequence is that of DNA-directed RNA polymerase subunit beta' (rpoC1) from Plasmodium falciparum (isolate 3D7).